Consider the following 86-residue polypeptide: Large ribosomal subunit protein bL31B (86 aa).

Belongs to the bacterial ribosomal protein bL31 family. Type B subfamily. As to quaternary structure, part of the 50S ribosomal subunit.

This Vibrio vulnificus (strain CMCP6) protein is Large ribosomal subunit protein bL31B.